The primary structure comprises 229 residues: Potassium/proton antiporter CemA (229 aa).

Helical transmembrane passes span Phe-7–Phe-27, Ile-107–Gly-127, and Ile-189–Ile-209.

The protein belongs to the CemA family.

It localises to the plastid. The protein localises to the chloroplast inner membrane. The enzyme catalyses K(+)(in) + H(+)(out) = K(+)(out) + H(+)(in). Contributes to K(+)/H(+) antiport activity by supporting proton efflux to control proton extrusion and homeostasis in chloroplasts in a light-dependent manner to modulate photosynthesis. Prevents excessive induction of non-photochemical quenching (NPQ) under continuous-light conditions. Indirectly promotes efficient inorganic carbon uptake into chloroplasts. The polypeptide is Potassium/proton antiporter CemA (Lactuca sativa (Garden lettuce)).